Reading from the N-terminus, the 216-residue chain is UPF0711 protein C18orf21 homolog (216 aa).

Disordered regions lie at residues 118–185 and 197–216; these read RSFL…ASKT and SQSE…LSSL. The span at 124–136 shows a compositional bias: polar residues; sequence LKSNPTTPTSKLS. Phosphoserine is present on S126. Phosphothreonine is present on residues T130 and T139. Polar residues-rich tracts occupy residues 145 to 157 and 167 to 182; these read PSSA…SGSK and TPTS…SKNA. Over residues 200–209 the composition is skewed to basic and acidic residues; the sequence is ESKKNPKMDF.

Belongs to the UPF0711 family.

This Bos taurus (Bovine) protein is UPF0711 protein C18orf21 homolog.